Reading from the N-terminus, the 74-residue chain is UPF0435 protein ABC2298 (74 aa).

This sequence belongs to the UPF0435 family.

The sequence is that of UPF0435 protein ABC2298 from Shouchella clausii (strain KSM-K16) (Alkalihalobacillus clausii).